A 295-amino-acid polypeptide reads, in one-letter code: Replication-associated protein A (295 aa).

The disordered stretch occupies residues 1 to 31 (MSSLPVSESEGEGSGTSVQVPSRGGQVTPGE). Positions 35 to 138 (SLRTKHVFLT…PESSWEFGKF (104 aa)) constitute a CRESS-DNA virus Rep endonuclease domain. Residues 42 to 45 (FLTY) carry the RCR-1 motif. Positions 76, 84, and 86 each coordinate a divalent metal cation. Positions 84–86 (HLH) match the RCR-2 motif. Tyr124 functions as the For DNA cleavage activity in the catalytic mechanism. The short motif at 124 to 127 (YCMK) is the RCR-3 element. The oligomerization stretch occupies residues 192–204 (SANALFPDPPQTY).

This sequence belongs to the geminiviridae Rep protein family. As to quaternary structure, homooligomer. Part of the C- and V-complexes which are RepA-Rep-DNA complexes involved in the c-sense and v-sense transcription.

The protein resides in the host nucleus. It localises to the host cytoplasm. Its function is as follows. Implicated in enhancement of V-sense gene expression. Acts a an inhibitor of C-sense gene transcription. This Avena sativa (Oat) protein is Replication-associated protein A.